Reading from the N-terminus, the 246-residue chain is MyoD family inhibitor domain-containing protein (246 aa).

The segment at 1–71 (MSGAGEALAP…WGNPSDGELI (71 aa)) is disordered. Over residues 33–43 (KCDKDNTEKDI) the composition is skewed to basic and acidic residues. Residues 44-63 (TQATNSHFTHGEMQDQSIWG) show a composition bias toward polar residues. An MDFI domain is found at 74–246 (QPQRLPQLQT…MECCGICFPS (173 aa)). Phosphoserine occurs at positions 128, 140, and 143.

The protein belongs to the MDFI family. Interacts with HAND1; the interaction sequesters HAND1 into the nucleolus and inhibits its activity. Interacts (via C-terminus) with ZIC2. Interacts (via C-terminus) with AXIN1, the histidine-rich region of CCNT1/cyclin-T and weakly with LEF1. Interacts with CCNT2. Interacts with GATA2. Interacts (via C-terminus) with Piezo channel composed of PIEZO1 or PIEZO2; the interaction prolongs Piezo channel inactivation. As to quaternary structure, (Microbial infection) Interacts (via C-terminus) with HIV-1 Tat and Rev. In terms of processing, palmitoylated. In terms of tissue distribution, expressed in lymphatic tissues. Detected in the spleen, thymus, peripheral blood leukocytes as well as prostate, uterus and small intestine. Expressed in lymphatic endothelial cells.

The protein localises to the nucleus. It is found in the nucleolus. Its subcellular location is the cytoplasm. The protein resides in the secreted. Its function is as follows. Required to control the activity of various transcription factors through their sequestration in the cytoplasm. Retains nuclear Zic proteins ZIC1, ZIC2 and ZIC3 in the cytoplasm and inhibits their transcriptional activation. Modulates the expression from cellular promoters. Binds to the axin complex, resulting in an increase in the level of free beta-catenin. Affects axin regulation of the WNT and JNK signaling pathways. Involved in the development of lymphatic vessel valves. Required to promote lymphatic endothelial cell migration, in a process that involves down-regulation of integrin beta 1 activation and control of cell adhesion to the extracellular matrix. Regulates the activity of mechanosensitive Piezo channel. In terms of biological role, (Microbial infection) Modulates the expression from viral promoters. Down-regulates Tat-dependent transcription of the human immunodeficiency virus type 1 (HIV-1) LTR by interacting with HIV-1 Tat and Rev and impairing their nuclear import, probably by rendering the NLS domains inaccessible to importin-beta. Also stimulates activation of human T-cell leukemia virus type I (HTLV-I) LTR. The protein is MyoD family inhibitor domain-containing protein of Homo sapiens (Human).